The chain runs to 492 residues: Catalase isozyme 1 (492 aa).

Catalysis depends on residues histidine 65 and asparagine 138. Heme is bound at residue tyrosine 348.

It belongs to the catalase family. Homotetramer. It depends on heme as a cofactor.

The protein resides in the peroxisome. It localises to the glyoxysome. It catalyses the reaction 2 H2O2 = O2 + 2 H2O. In terms of biological role, occurs in almost all aerobically respiring organisms and serves to protect cells from the toxic effects of hydrogen peroxide. This chain is Catalase isozyme 1 (CAT1), found in Solanum tuberosum (Potato).